A 52-amino-acid polypeptide reads, in one-letter code: Large ribosomal subunit protein bL32c (52 aa).

The protein belongs to the bacterial ribosomal protein bL32 family.

It localises to the plastid. The protein localises to the chloroplast. This is Large ribosomal subunit protein bL32c from Citrus sinensis (Sweet orange).